The chain runs to 150 residues: Peptide deformylase 2 (150 aa).

Residues Cys-89 and His-131 each contribute to the Fe cation site. Glu-132 is a catalytic residue. Fe cation is bound at residue His-135.

It belongs to the polypeptide deformylase family. Fe(2+) is required as a cofactor.

The catalysed reaction is N-terminal N-formyl-L-methionyl-[peptide] + H2O = N-terminal L-methionyl-[peptide] + formate. Its function is as follows. Removes the formyl group from the N-terminal Met of newly synthesized proteins. Requires at least a dipeptide for an efficient rate of reaction. N-terminal L-methionine is a prerequisite for activity but the enzyme has broad specificity at other positions. The protein is Peptide deformylase 2 of Clostridium acetobutylicum (strain ATCC 824 / DSM 792 / JCM 1419 / IAM 19013 / LMG 5710 / NBRC 13948 / NRRL B-527 / VKM B-1787 / 2291 / W).